Here is a 780-residue protein sequence, read N- to C-terminus: Subtilisin-like protease SBT5.1 (780 aa).

The signal sequence occupies residues 1–25 (MMRCLTITIMFFMFFFLSVIQKCKS). Positions 26–106 (ETSKSGDYII…VFPDQMLQLH (81 aa)) are cleaved as a propeptide — activation peptide. Residues 33-106 (YIIYMGAASS…VFPDQMLQLH (74 aa)) form the Inhibitor I9 domain. A Peptidase S8 domain is found at 110 to 617 (SWDFLVQESY…AGQVTIFGPS (508 aa)). The active-site Charge relay system is the Asp-147. N-linked (GlcNAc...) asparagine glycosylation occurs at Asn-197. His-215 (charge relay system) is an active-site residue. N-linked (GlcNAc...) asparagine glycosylation is present at Asn-230. In terms of domain architecture, PA spans 385 to 469 (IDANEEAARN…PEDGIQIMSY (85 aa)). Asn-471 carries N-linked (GlcNAc...) asparagine glycosylation. Catalysis depends on Ser-550, which acts as the Charge relay system. Asn-776 carries N-linked (GlcNAc...) asparagine glycosylation.

Belongs to the peptidase S8 family.

The protein resides in the secreted. This is Subtilisin-like protease SBT5.1 from Arabidopsis thaliana (Mouse-ear cress).